Reading from the N-terminus, the 267-residue chain is 27 kDa core protein (267 aa).

The protein belongs to the chordopoxvirinae D3 family.

It localises to the virion. Late protein which is part of a large complex required for early virion morphogenesis. This complex participates in the formation of virosomes and the incorporation of virosomal contents into nascent immature virions. The chain is 27 kDa core protein from Canarypox virus (CNPV).